The primary structure comprises 103 residues: Small ubiquitin-related modifier 2 (103 aa).

The Ubiquitin-like domain occupies 15-92 (AHINLKVKGQ…IDAMLHQTGG (78 aa)). Glycine 92 participates in a covalent cross-link: Glycyl lysine isopeptide (Gly-Lys) (interchain with K-? in acceptor proteins).

Belongs to the ubiquitin family. SUMO subfamily. As to quaternary structure, interacts with SAE2, SCE1, SIZ1 and MMS21. Interacts with HSFA2. Covalently attached to ABI5, FLD, GTE3, HSFA2 and ICE1.

It is found in the nucleus. Its subcellular location is the cytoplasm. In terms of biological role, ubiquitin-like protein which can be covalently attached to target lysines as a monomer. Does not seem to be involved in protein degradation and may function as an antagonist of ubiquitin in the degradation process. Required for the massive protein sumoylation in the nucleus induced by heat shock and controlled by SIZ1. The protein is Small ubiquitin-related modifier 2 of Arabidopsis thaliana (Mouse-ear cress).